We begin with the raw amino-acid sequence, 197 residues long: Adenylylsulfatase HINT3 (197 aa).

Positions 14-43 (NPPGPNPTRDPTLRVSDCSSGSSGDGKVES) are disordered. One can recognise an HIT domain in the interval 51 to 158 (VFCKIIRGES…IPRKERDCLW (108 aa)). Positions 143-147 (HTHIH) match the Histidine triad motif motif. The active-site Tele-AMP-histidine intermediate is His-145. His-147 is a binding site for substrate.

The protein resides in the peroxisome. It carries out the reaction adenosine 5'-phosphosulfate + H2O = sulfate + AMP + 2 H(+). Functionally, possesses adenylylsulfatase activity in vitro. This Arabidopsis thaliana (Mouse-ear cress) protein is Adenylylsulfatase HINT3.